We begin with the raw amino-acid sequence, 584 residues long: Arginine--tRNA ligase (584 aa).

The short motif at 127–137 (PNTNKPLHIGH) is the 'HIGH' region element.

The protein belongs to the class-I aminoacyl-tRNA synthetase family. In terms of assembly, monomer.

It localises to the cytoplasm. The catalysed reaction is tRNA(Arg) + L-arginine + ATP = L-arginyl-tRNA(Arg) + AMP + diphosphate. This Borrelia hermsii (strain HS1 / DAH) protein is Arginine--tRNA ligase.